A 628-amino-acid chain; its full sequence is MAVLPLLLCLLPLAPASSPPQPASPSPCPRRCRCQTQSLPLSVLCPGAGLLFVPPSLDRRAAELRLADNFIATVRRRDLANMTGLLHLSLSRNTIRHVAAGAFSDLRALRALHLDGNRLTSLGEGQLRGLVNLRHLILSNNQLAALAAGALDDCAETLEDLDLSYNNLEQLPWEALGRLGNVNTLGLDHNLLASVPAGAFSRLHKLARLDMTSNRLTTIPPDPLFSRLPLLARPRGSPASALVLAFGGNPLHCNCELVWLRRLAREDDLEACASPPALGGRYFWAVGEEEFVCEPPVVTHRSPPLAVPAGRPAALRCRAVGDPEPRVRWVSPQGRLLGNSSRARAFPNGTLELLVTEPGDGGIFTCIAANAAGEATAAVELTVGPPPPPQLANSTSCDPPRDGEPDALTPPSAASASASAKAAEAGPPTDRGVQVTEHGATAALIQWPDQRPIPGIRMYQIQYNSSADDILVYRMIPAESSSFLLTDLASGRTYDLCVLAVYEDSATGLTATRPVGCNRFSTEPALRPCGAPHAPFLGGTMIIALGGVIVASVLVFIFVLLMRYKVHGGQPPGKTKASAPVSSVCSQTNGALGPMPAPPAPEPSAPRAHTVVQLDCEPWGPSHEPMGP.

The signal sequence occupies residues Met1 to Ala16. The Extracellular segment spans residues Ser17–Thr540. The 41-residue stretch at Pro19 to Arg59 folds into the LRRNT domain. 7 LRR repeats span residues Arg60 to Thr83, Gly84 to Asp105, Ala108 to Gly129, Asn132 to Asp153, Thr157 to Arg178, Asn181 to Arg202, and Lys205 to Ser226. One can recognise an LRRCT domain in the interval Asn249–Pro295. The 88-residue stretch at Pro295 to Thr382 folds into the Ig-like domain. Cys317 and Cys366 are oxidised to a cystine. N-linked (GlcNAc...) asparagine glycans are attached at residues Asn348 and Asn393. The tract at residues Glu380 to Val433 is disordered. Positions Pro410–Pro428 are enriched in low complexity. The Fibronectin type-III domain maps to Pro427–Ala525. A helical membrane pass occupies residues Met541–Leu561. At Met562–Pro628 the chain is on the cytoplasmic side. Residues Gln570–His609 are disordered. The span at Pro580 to Gly590 shows a compositional bias: polar residues. Pro residues predominate over residues Met595–Ser604.

It belongs to the LRFN family. In terms of assembly, can form heteromeric complexes with LRFN1, LRFN2, LRFN4 and LRFN5. Able to form homomeric complexes across cell junctions, between adjacent cells. Does not interact with DLG4. In terms of processing, N-glycosylated.

It localises to the cell membrane. The protein localises to the cell projection. The protein resides in the axon. Its subcellular location is the dendrite. It is found in the synapse. It localises to the presynaptic cell membrane. The protein localises to the postsynaptic cell membrane. In terms of biological role, cell adhesion molecule that mediates homophilic cell-cell adhesion in a Ca(2+)-independent manner. Promotes neurite outgrowth in hippocampal neurons. The polypeptide is Leucine-rich repeat and fibronectin type-III domain-containing protein 3 (LRFN3) (Bos taurus (Bovine)).